The chain runs to 873 residues: Probable beta-glucosidase A (873 aa).

The N-terminal stretch at M1 to A19 is a signal peptide. N-linked (GlcNAc...) asparagine glycans are attached at residues N71, N222, and N263. The active site involves D291. Residues N326, N333, N365, N453, N534, N553, N575, N679, and N725 are each glycosylated (N-linked (GlcNAc...) asparagine). The tract at residues E730–P765 is disordered.

This sequence belongs to the glycosyl hydrolase 3 family.

Its subcellular location is the secreted. It carries out the reaction Hydrolysis of terminal, non-reducing beta-D-glucosyl residues with release of beta-D-glucose.. The protein operates within glycan metabolism; cellulose degradation. Functionally, beta-glucosidases are one of a number of cellulolytic enzymes involved in the degradation of cellulosic biomass. Catalyzes the last step releasing glucose from the inhibitory cellobiose. In Neosartorya fischeri (strain ATCC 1020 / DSM 3700 / CBS 544.65 / FGSC A1164 / JCM 1740 / NRRL 181 / WB 181) (Aspergillus fischerianus), this protein is Probable beta-glucosidase A (bglA).